A 264-amino-acid chain; its full sequence is O-methyltransferase resE (264 aa).

Residues glutamine 97 and histidine 142 each contribute to the S-adenosyl-L-methionine site.

This sequence belongs to the methyltransferase superfamily.

It catalyses the reaction desmethylrestrictinol + S-adenosyl-L-methionine = restrictinol + S-adenosyl-L-homocysteine + H(+). It functions in the pathway antifungal biosynthesis. Functionally, O-methyltransferase; part of the gene cluster that mediates the biosynthesis of the tetrahydropyranyl antifungal agent restricticin that acts as an inhibitor of CYP51 and blocks the ergosterol biosynthesis. Within the pathway, resE uses S-adenosylmethionine to methylate position C4 of desmethylrestrictinol to produce restrictinol. The highly reducing polyketide synthase resH, the short chain dehydrogenase resG, the cyclase resF, the FAD-dependent monooxygenase resA and the enoylreductase resD are required to generate the first stable intermediate desmethylrestrictinol. ResH with resD biosynthesize the first polyketide chain intermediate that is reduced by resG, followed by epoxidation by resA before 6-endo cyclization via epoxide opening by resF leads to desmethylrestrictinol. The methyltransferase resE then catalyzes the C4 O-methylation of desmethylrestrictinol to produce restrictinol, and the nonribosomal peptide synthetase resC catalyzes the C3 esterification of restrictinol with glycine that leads to restricticin. This chain is O-methyltransferase resE, found in Aspergillus sclerotiorum.